A 434-amino-acid chain; its full sequence is Enolase (434 aa).

Q163 contributes to the (2R)-2-phosphoglycerate binding site. E205 (proton donor) is an active-site residue. D242, E291, and D318 together coordinate Mg(2+). The (2R)-2-phosphoglycerate site is built by K343, R372, S373, and K394. The Proton acceptor role is filled by K343.

Belongs to the enolase family. Mg(2+) is required as a cofactor.

It localises to the cytoplasm. It is found in the secreted. The protein localises to the cell surface. It carries out the reaction (2R)-2-phosphoglycerate = phosphoenolpyruvate + H2O. Its pathway is carbohydrate degradation; glycolysis; pyruvate from D-glyceraldehyde 3-phosphate: step 4/5. Functionally, catalyzes the reversible conversion of 2-phosphoglycerate (2-PG) into phosphoenolpyruvate (PEP). It is essential for the degradation of carbohydrates via glycolysis. In Streptococcus pneumoniae serotype 19F (strain G54), this protein is Enolase.